Consider the following 459-residue polypeptide: Pup--protein ligase (459 aa).

E9 lines the Mg(2+) pocket. R54 contacts ATP. Y56 is a Mg(2+) binding site. Residue D58 is the Proton acceptor of the active site. E64 serves as a coordination point for Mg(2+). Positions 67 and 421 each coordinate ATP.

The protein belongs to the Pup ligase/Pup deamidase family. Pup-conjugating enzyme subfamily.

It carries out the reaction ATP + [prokaryotic ubiquitin-like protein]-L-glutamate + [protein]-L-lysine = ADP + phosphate + N(6)-([prokaryotic ubiquitin-like protein]-gamma-L-glutamyl)-[protein]-L-lysine.. Its pathway is protein degradation; proteasomal Pup-dependent pathway. It functions in the pathway protein modification; protein pupylation. Catalyzes the covalent attachment of the prokaryotic ubiquitin-like protein modifier Pup to the proteasomal substrate proteins, thereby targeting them for proteasomal degradation. This tagging system is termed pupylation. The ligation reaction involves the side-chain carboxylate of the C-terminal glutamate of Pup and the side-chain amino group of a substrate lysine. This chain is Pup--protein ligase, found in Jonesia denitrificans (strain ATCC 14870 / DSM 20603 / BCRC 15368 / CIP 55.134 / JCM 11481 / NBRC 15587 / NCTC 10816 / Prevot 55134) (Listeria denitrificans).